The following is a 161-amino-acid chain: Ribonuclease H (161 aa).

In terms of domain architecture, RNase H type-1 spans 11–152 (GPRPVVIHTD…ADQLARDGLT (142 aa)). 4 residues coordinate Mg(2+): aspartate 20, glutamate 58, aspartate 80, and aspartate 144. The interval 137–161 (HDENERADQLARDGLTENRMKSRIG) is disordered.

It belongs to the RNase H family. As to quaternary structure, monomer. It depends on Mg(2+) as a cofactor.

It localises to the cytoplasm. It carries out the reaction Endonucleolytic cleavage to 5'-phosphomonoester.. In terms of biological role, endonuclease that specifically degrades the RNA of RNA-DNA hybrids. In Rhodopseudomonas palustris (strain HaA2), this protein is Ribonuclease H.